The following is a 147-amino-acid chain: Cyanate hydratase (147 aa).

Active-site residues include arginine 88, glutamate 91, and serine 114.

The protein belongs to the cyanase family.

It catalyses the reaction cyanate + hydrogencarbonate + 3 H(+) = NH4(+) + 2 CO2. Functionally, catalyzes the reaction of cyanate with bicarbonate to produce ammonia and carbon dioxide. This Polynucleobacter asymbioticus (strain DSM 18221 / CIP 109841 / QLW-P1DMWA-1) (Polynucleobacter necessarius subsp. asymbioticus) protein is Cyanate hydratase.